The sequence spans 256 residues: MDLSFIEGFETIWTVVRAVVLNYLLRSLKILSTILYVSAVISWNVSLKVFGNVLLPGFLTIRTVVIFILRIVSLFLWILADPAILLVQSVYWYFIRAPARFILMVGITLYPLYVLLSWAVFLGIIVGFSLNSVFTFIDSFATPSSNSTVTEAMTKMKNEKVLEYPYKDRNIMLGDLASRIPSKDSEKLDEERQPIALEKTKSLDSISHSSSSSRKSSTELKIPPVETRIVAEIPVPSSVKRRRHRPNKSMGSIKNS.

A run of 4 helical transmembrane segments spans residues Phe5 to Leu25, Ile30 to Phe50, Val64 to Ile84, and Val105 to Ile125. The disordered stretch occupies residues Glu198–Ser256. A compositionally biased stretch (low complexity) spans Leu203–Lys215. Residues Ser210 and Ser211 each carry the phosphoserine modification.

It is found in the endoplasmic reticulum membrane. The protein localises to the nucleus membrane. This is an uncharacterized protein from Schizosaccharomyces pombe (strain 972 / ATCC 24843) (Fission yeast).